A 67-amino-acid polypeptide reads, in one-letter code: Large ribosomal subunit protein bL35 (67 aa).

The protein belongs to the bacterial ribosomal protein bL35 family.

The protein is Large ribosomal subunit protein bL35 of Synechocystis sp. (strain ATCC 27184 / PCC 6803 / Kazusa).